We begin with the raw amino-acid sequence, 90 residues long: Sec-independent protein translocase protein TatA (90 aa).

A helical membrane pass occupies residues 1-21 (MGISPWTLLIVLLIVLLVFGT). Composition is skewed to basic and acidic residues over residues 42–59 (MKEG…EPSK) and 70–90 (SGEG…RHSS). The interval 42-90 (MKEGEEGAKEGEKSEPSKLEQPPEEEKESGEGHTIEGERSEQPRDRHSS) is disordered.

This sequence belongs to the TatA/E family. In terms of assembly, the Tat system comprises two distinct complexes: a TatABC complex, containing multiple copies of TatA, TatB and TatC subunits, and a separate TatA complex, containing only TatA subunits. Substrates initially bind to the TatABC complex, which probably triggers association of the separate TatA complex to form the active translocon.

The protein localises to the cell inner membrane. In terms of biological role, part of the twin-arginine translocation (Tat) system that transports large folded proteins containing a characteristic twin-arginine motif in their signal peptide across membranes. TatA could form the protein-conducting channel of the Tat system. The polypeptide is Sec-independent protein translocase protein TatA (Alkalilimnicola ehrlichii (strain ATCC BAA-1101 / DSM 17681 / MLHE-1)).